We begin with the raw amino-acid sequence, 154 residues long: MAVDPNVKTLVENRRARFEYEILETYEAGIQLTGTEVKSIRAGKANLQDAFALFRDGEAWLHNLHVAPHGTASKVFNHDPTRRRKLLLHRREIDRLRGLVEQKGLTVVPLRLVLNRGWIKAHLGVARGKKLHDKRQAIKERETRREIQRELKGR.

Belongs to the SmpB family.

Its subcellular location is the cytoplasm. In terms of biological role, required for rescue of stalled ribosomes mediated by trans-translation. Binds to transfer-messenger RNA (tmRNA), required for stable association of tmRNA with ribosomes. tmRNA and SmpB together mimic tRNA shape, replacing the anticodon stem-loop with SmpB. tmRNA is encoded by the ssrA gene; the 2 termini fold to resemble tRNA(Ala) and it encodes a 'tag peptide', a short internal open reading frame. During trans-translation Ala-aminoacylated tmRNA acts like a tRNA, entering the A-site of stalled ribosomes, displacing the stalled mRNA. The ribosome then switches to translate the ORF on the tmRNA; the nascent peptide is terminated with the 'tag peptide' encoded by the tmRNA and targeted for degradation. The ribosome is freed to recommence translation, which seems to be the essential function of trans-translation. The sequence is that of SsrA-binding protein from Synechococcus sp. (strain JA-3-3Ab) (Cyanobacteria bacterium Yellowstone A-Prime).